The sequence spans 502 residues: MSYFPWLTVIVVLPISAGSSIFFVPYRGNKNKVIRWYTICICLLEILLTTYAFCYHFQSDDPLIQLEEAYKWIHIFDFHWRPGIDGLSIGPILLTGFITTLATLAARPVTRDSRLFHFLMLAMYSGQVGSFSSRDLLLFFLMWELELIPVYLLLSMWGGKKRMYSATKFILYTAGGSIFLLMGVSGMGLYGSNEPTLNFETLANQSYPLGLEIIFYFGFLIAYAVKSPIIPLHTWLPDTHGEAHYSTCMLLAGILLKMGAYGLVRINMELLPHAHSIFSPWLVIVGAIQIIYAASTSFGQRNFKKRIAYSSVSHMGFTLIGIGSITDTGLNGAILQIISHGFIGAALFFLAGTSYDRIRLVYLDEMGGIAIPMPKIFTMFSSFSMASLALPGMSGFVAELVVFFGIITSSKYLLMPKIVISFVMAIGMILTPIYSLSMLRRMFYGYKLFNVPDFYFLDSGPRELFVSICIFLPVVGIGIYPDFVLSLSVDRVEAILSNYFHK.

14 helical membrane passes run 4–24 (FPWL…IFFV), 37–57 (YTIC…CYHF), 86–106 (GLSI…TLAA), 113–131 (SRLF…VGSF), 136–156 (LLLF…LLSM), 169–189 (FILY…GMGL), 210–230 (GLEI…SPII), 244–264 (HYST…YGLV), 274–294 (AHSI…IYAA), 307–327 (IAYS…SITD), 332–352 (GAIL…FLAG), 388–408 (LALP…GIIT), 418–438 (IVIS…SLSM), and 464–484 (LFVS…PDFV).

Belongs to the complex I subunit 4 family.

It localises to the plastid. It is found in the chloroplast thylakoid membrane. The enzyme catalyses a plastoquinone + NADH + (n+1) H(+)(in) = a plastoquinol + NAD(+) + n H(+)(out). The catalysed reaction is a plastoquinone + NADPH + (n+1) H(+)(in) = a plastoquinol + NADP(+) + n H(+)(out). This Calycanthus floridus var. glaucus (Eastern sweetshrub) protein is NAD(P)H-quinone oxidoreductase chain 4, chloroplastic.